Here is a 224-residue protein sequence, read N- to C-terminus: 3-dehydroquinate dehydratase (224 aa).

3-dehydroquinate-binding positions include 35 to 37 and R65; that span reads EFR. The active-site Proton donor/acceptor is H120. The Schiff-base intermediate with substrate role is filled by K146. 3-dehydroquinate is bound by residues R183, T202, and Q206.

The protein belongs to the type-I 3-dehydroquinase family. In terms of assembly, homodimer.

The catalysed reaction is 3-dehydroquinate = 3-dehydroshikimate + H2O. Its pathway is metabolic intermediate biosynthesis; chorismate biosynthesis; chorismate from D-erythrose 4-phosphate and phosphoenolpyruvate: step 3/7. Functionally, involved in the third step of the chorismate pathway, which leads to the biosynthesis of aromatic amino acids. Catalyzes the cis-dehydration of 3-dehydroquinate (DHQ) and introduces the first double bond of the aromatic ring to yield 3-dehydroshikimate. The chain is 3-dehydroquinate dehydratase from Methanobrevibacter smithii (strain ATCC 35061 / DSM 861 / OCM 144 / PS).